A 148-amino-acid polypeptide reads, in one-letter code: 3-dehydroquinate dehydratase (148 aa).

The active-site Proton acceptor is Y26. Substrate is bound by residues N77, H83, and D90. H103 functions as the Proton donor in the catalytic mechanism. Residues 104 to 105 (LS) and R114 each bind substrate.

The protein belongs to the type-II 3-dehydroquinase family. Homododecamer.

It carries out the reaction 3-dehydroquinate = 3-dehydroshikimate + H2O. The protein operates within metabolic intermediate biosynthesis; chorismate biosynthesis; chorismate from D-erythrose 4-phosphate and phosphoenolpyruvate: step 3/7. In terms of biological role, catalyzes a trans-dehydration via an enolate intermediate. This chain is 3-dehydroquinate dehydratase (aroQ), found in Pasteurella multocida (strain Pm70).